The sequence spans 312 residues: MSGTNQSSVSEFLLLGLSRQPQQQHLLFVFFLSMYLATVLGNLLIILSVSIDSCLHTPMYFFLSNLSFVDICFSFTTVPKMLANHILETQTISFCGCLTQMYFVFMFVDMDNFLLAVMAYDHFVAVCHPLHYTAKMTHQLCALLVAGLWVVANLNVLLHTLLMAPLSFCADNAITHFFCDVTPLLKLSCSDTHLNEVIILSEGALVMITPFLCILASYMHITCTVLKVPSTKGRWKAFSTCGSHLAVVLLFYSTIIAVYFNPLSSHSAEKDTMATVLYTVVTPMLNPFIYSLRNRYLKGALKKVVGRVVFSV.

The Extracellular segment spans residues 1–25 (MSGTNQSSVSEFLLLGLSRQPQQQH). The N-linked (GlcNAc...) asparagine glycan is linked to N5. Residues 26–49 (LLFVFFLSMYLATVLGNLLIILSV) form a helical membrane-spanning segment. The Cytoplasmic segment spans residues 50–57 (SIDSCLHT). The chain crosses the membrane as a helical span at residues 58–79 (PMYFFLSNLSFVDICFSFTTVP). Residues 80–100 (KMLANHILETQTISFCGCLTQ) lie on the Extracellular side of the membrane. A disulfide bond links C97 and C189. Residues 101–120 (MYFVFMFVDMDNFLLAVMAY) form a helical membrane-spanning segment. Topologically, residues 121 to 139 (DHFVAVCHPLHYTAKMTHQ) are cytoplasmic. A helical membrane pass occupies residues 140–158 (LCALLVAGLWVVANLNVLL). Over 159-196 (HTLLMAPLSFCADNAITHFFCDVTPLLKLSCSDTHLNE) the chain is Extracellular. A helical transmembrane segment spans residues 197–219 (VIILSEGALVMITPFLCILASYM). Topologically, residues 220 to 236 (HITCTVLKVPSTKGRWK) are cytoplasmic. The chain crosses the membrane as a helical span at residues 237-259 (AFSTCGSHLAVVLLFYSTIIAVY). At 260–272 (FNPLSSHSAEKDT) the chain is on the extracellular side. The helical transmembrane segment at 273 to 292 (MATVLYTVVTPMLNPFIYSL) threads the bilayer. Residues 293 to 312 (RNRYLKGALKKVVGRVVFSV) are Cytoplasmic-facing.

The protein belongs to the G-protein coupled receptor 1 family.

It is found in the cell membrane. In terms of biological role, odorant receptor. This chain is Olfactory receptor 1F1 (OR1F1), found in Homo sapiens (Human).